The following is a 480-amino-acid chain: Aspartyl/glutamyl-tRNA(Asn/Gln) amidotransferase subunit B (480 aa).

Belongs to the GatB/GatE family. GatB subfamily. Heterotrimer of A, B and C subunits.

The enzyme catalyses L-glutamyl-tRNA(Gln) + L-glutamine + ATP + H2O = L-glutaminyl-tRNA(Gln) + L-glutamate + ADP + phosphate + H(+). The catalysed reaction is L-aspartyl-tRNA(Asn) + L-glutamine + ATP + H2O = L-asparaginyl-tRNA(Asn) + L-glutamate + ADP + phosphate + 2 H(+). Allows the formation of correctly charged Asn-tRNA(Asn) or Gln-tRNA(Gln) through the transamidation of misacylated Asp-tRNA(Asn) or Glu-tRNA(Gln) in organisms which lack either or both of asparaginyl-tRNA or glutaminyl-tRNA synthetases. The reaction takes place in the presence of glutamine and ATP through an activated phospho-Asp-tRNA(Asn) or phospho-Glu-tRNA(Gln). The polypeptide is Aspartyl/glutamyl-tRNA(Asn/Gln) amidotransferase subunit B (Streptococcus pneumoniae (strain CGSP14)).